Consider the following 110-residue polypeptide: Iron-sulfur cluster assembly protein CyaY (110 aa).

The protein belongs to the frataxin family.

In terms of biological role, involved in iron-sulfur (Fe-S) cluster assembly. May act as a regulator of Fe-S biogenesis. The protein is Iron-sulfur cluster assembly protein CyaY of Azotobacter vinelandii (strain DJ / ATCC BAA-1303).